A 97-amino-acid chain; its full sequence is uncharacterized protein (97 aa).

The next 3 membrane-spanning stretches (helical) occupy residues 5 to 25 (TLVA…SLSV), 27 to 47 (MVFV…LICY), and 77 to 97 (IISI…VFIL).

Its subcellular location is the membrane. This is an uncharacterized protein from Saccharomyces cerevisiae (strain ATCC 204508 / S288c) (Baker's yeast).